The sequence spans 694 residues: MVSVEGRAMSFQSIIHLSLDSPVHAVCVLGTEICLDLSGCAPQKCQCFTIHGSGRVLIDVANTVISEKEDATIWWPLSDPTYATVKMTSPSPSVDADKVSVTYYGPNEDAPVGTAVLYLTGIEVSLEVDIYRNGQVEMSSDKQAKKKWIWGPSGWGAILLVNCNPADVGQQLEDKKTKKVIFSEEITNLSQMTLNVQGPSCILKKYRLVLHTSKEESKKARVYWPQKDNSSTFELVLGPDQHAYTLALLGNHLKETFYVEAIAFPSAEFSGLISYSVSLVEESQDPSIPETVLYKDTVVFRVAPCVFIPCTQVPLEVYLCRELQLQGFVDTVTKLSEKSNSQVASVYEDPNRLGRWLQDEMAFCYTQAPHKTTSLILDTPQAADLDEFPMKYSLSPGIGYMIQDTEDHKVASMDSIGNLMVSPPVKVQGKEYPLGRVLIGSSFYPSAEGRAMSKTLRDFLYAQQVQAPVELYSDWLMTGHVDEFMCFIPTDDKNEGKKGFLLLLASPSACYKLFREKQKEGYGDALLFDELRADQLLSNGREAKTIDQLLADESLKKQNEYVEKCIHLNRDILKTELGLVEQDIIEIPQLFCLEKLTNIPSDQQPKRSFARPYFPDLLRMIVMGKNLGIPKPFGPQIKGTCCLEEKICCLLEPLGFKCTFINDFDCYLTEVGDICACANIRRVPFAFKWWKMVP.

S10 and S446 each carry phosphoserine.

This sequence belongs to the protein arginine deiminase family. In terms of assembly, homodimers. Associates with alpha-tubulin. Post-translationally, phosphorylation at Ser-10, possibly by RSK-type kinases, and Ser-446 creates binding sites for 14-3-3 proteins. In terms of tissue distribution, highly expressed in oocytes and weakly expressed in other somatic tissues.

The protein resides in the cytoplasm. It localises to the cytoplasmic vesicle. Its subcellular location is the secretory vesicle. It is found in the cortical granule. The protein localises to the nucleus. Functionally, structural constituent of cytoplasmic lattices, which plays a key role in early embryonic development. Cytoplasmic lattices consist in fibrous structures found in the cytoplasm of oocytes and preimplantation embryos. They are required to store maternal proteins critical for embryonic development, such as ribosomal proteins and proteins that control epigenetic reprogramming of the preimplantation embryo, and prevent their degradation or activation. In contrast to other members of the family, does not show protein-arginine deiminase activity due to its inability to bind Ca(2+). The sequence is that of Inactive protein-arginine deiminase type-6 from Homo sapiens (Human).